We begin with the raw amino-acid sequence, 160 residues long: Putative antiporter subunit mnhE2 (160 aa).

3 helical membrane-spanning segments follow: residues 22–42, 55–75, and 100–120; these read HFKF…IYIL, IWVA…SSIS, and SDWA…STVI.

The protein belongs to the CPA3 antiporters (TC 2.A.63) subunit E family. May form a heterooligomeric complex that consists of seven subunits: mnhA2, mnhB2, mnhC2, mnhD2, mnhE2, mnhF2 and mnhG2.

The protein resides in the cell membrane. This chain is Putative antiporter subunit mnhE2 (mnhE2), found in Staphylococcus aureus (strain Mu3 / ATCC 700698).